Consider the following 230-residue polypeptide: Ion-translocating oxidoreductase complex subunit E (230 aa).

Transmembrane regions (helical) follow at residues 18 to 38, 39 to 59, 63 to 83, 86 to 106, 128 to 148, and 182 to 202; these read ALVQ…ATNA, LGLG…ISTL, TPTE…VSAV, LINA…PLIV, ALDG…LGAM, and PFLL…MLAG.

It belongs to the NqrDE/RnfAE family. As to quaternary structure, the complex is composed of six subunits: RsxA, RsxB, RsxC, RsxD, RsxE and RsxG.

It localises to the cell inner membrane. Functionally, part of a membrane-bound complex that couples electron transfer with translocation of ions across the membrane. Required to maintain the reduced state of SoxR. The protein is Ion-translocating oxidoreductase complex subunit E of Escherichia fergusonii (strain ATCC 35469 / DSM 13698 / CCUG 18766 / IAM 14443 / JCM 21226 / LMG 7866 / NBRC 102419 / NCTC 12128 / CDC 0568-73).